The primary structure comprises 73 residues: Conotoxin CnIIIE (73 aa).

A signal peptide spans 1–19 (MSKLGVLLTICLLLFPLTA). The propeptide occupies 20 to 49 (LPMDGDQSVDRPAERMQDDISSEQYPLFNQ). Disulfide bonds link C53–C72, C54–C70, and C60–C73.

Belongs to the conotoxin M superfamily. As to expression, expressed by the venom duct.

It localises to the secreted. Functionally, shows a paralytic effect in fish. The sequence is that of Conotoxin CnIIIE from Conus consors (Singed cone).